Here is a 328-residue protein sequence, read N- to C-terminus: Endochitinase (328 aa).

The N-terminal stretch at methionine 1–alanine 26 is a signal peptide. Positions glutamine 27 to glycine 68 constitute a Chitin-binding type-1 domain. Intrachain disulfides connect cysteine 29–cysteine 44, cysteine 38–cysteine 50, cysteine 43–cysteine 57, cysteine 62–cysteine 66, cysteine 100–cysteine 162, cysteine 174–cysteine 182, and cysteine 281–cysteine 313. Glutamate 144 serves as the catalytic Proton donor. Residues alanine 322–leucine 328 constitute a propeptide, removed in mature form.

It belongs to the glycosyl hydrolase 19 family. Chitinase class I subfamily.

The protein localises to the vacuole. It carries out the reaction Random endo-hydrolysis of N-acetyl-beta-D-glucosaminide (1-&gt;4)-beta-linkages in chitin and chitodextrins.. Functionally, defense against chitin-containing fungal pathogens. The protein is Endochitinase of Solanum tuberosum (Potato).